The sequence spans 103 residues: Small ribosomal subunit protein uS10 (103 aa).

Belongs to the universal ribosomal protein uS10 family. Part of the 30S ribosomal subunit.

In terms of biological role, involved in the binding of tRNA to the ribosomes. In Shewanella loihica (strain ATCC BAA-1088 / PV-4), this protein is Small ribosomal subunit protein uS10.